The sequence spans 539 residues: Chaperonin GroEL 1 (539 aa).

ATP is bound by residues 29–32 (TLGP), 86–90 (DGTTT), Gly413, 478–480 (NAA), and Asp494. The tract at residues 520–539 (IVDKPAEPEDDGHGHHGHAH) is disordered. Residues 523 to 533 (KPAEPEDDGHG) show a composition bias toward basic and acidic residues.

The protein belongs to the chaperonin (HSP60) family. In terms of assembly, forms a cylinder of 14 subunits composed of two heptameric rings stacked back-to-back. Interacts with the co-chaperonin GroES.

Its subcellular location is the cytoplasm. The catalysed reaction is ATP + H2O + a folded polypeptide = ADP + phosphate + an unfolded polypeptide.. Functionally, together with its co-chaperonin GroES, plays an essential role in assisting protein folding. The GroEL-GroES system forms a nano-cage that allows encapsulation of the non-native substrate proteins and provides a physical environment optimized to promote and accelerate protein folding. The protein is Chaperonin GroEL 1 of Mycobacterium ulcerans (strain Agy99).